The sequence spans 170 residues: 3-hydroxydecanoyl-[acyl-carrier-protein] dehydratase (170 aa).

His71 is an active-site residue.

It belongs to the thioester dehydratase family. FabA subfamily. As to quaternary structure, homodimer.

It localises to the cytoplasm. The catalysed reaction is a (3R)-hydroxyacyl-[ACP] = a (2E)-enoyl-[ACP] + H2O. It catalyses the reaction (3R)-hydroxydecanoyl-[ACP] = (2E)-decenoyl-[ACP] + H2O. The enzyme catalyses (2E)-decenoyl-[ACP] = (3Z)-decenoyl-[ACP]. Its pathway is lipid metabolism; fatty acid biosynthesis. Necessary for the introduction of cis unsaturation into fatty acids. Catalyzes the dehydration of (3R)-3-hydroxydecanoyl-ACP to E-(2)-decenoyl-ACP and then its isomerization to Z-(3)-decenoyl-ACP. Can catalyze the dehydratase reaction for beta-hydroxyacyl-ACPs with saturated chain lengths up to 16:0, being most active on intermediate chain length. This Chelativorans sp. (strain BNC1) protein is 3-hydroxydecanoyl-[acyl-carrier-protein] dehydratase.